The following is a 202-amino-acid chain: Alpha-S1-casein (202 aa).

Disordered stretches follow at residues Arg1 to Glu25 and Leu51 to Ile84. Composition is skewed to basic and acidic residues over residues Gln16–Glu25 and Leu51–Leu63. Phosphoserine is present on Ser18. Low complexity predominate over residues Gln70–Glu80. Phosphoserine occurs at positions 72, 73, 74, 76, 77, and 78.

Belongs to the alpha-casein family. As to expression, mammary gland specific. Secreted in milk.

The protein resides in the secreted. Its function is as follows. Important role in the capacity of milk to transport calcium phosphate. The protein is Alpha-S1-casein of Equus asinus (Donkey).